The sequence spans 151 residues: UPF0208 membrane protein ECA3038 (151 aa).

2 helical membrane-spanning segments follow: residues 46-66 (FGIRIMPPLAVFTLTWQIALG) and 69-89 (LGPAIATALFACSLPLQGLWW).

The protein belongs to the UPF0208 family.

Its subcellular location is the cell inner membrane. The chain is UPF0208 membrane protein ECA3038 from Pectobacterium atrosepticum (strain SCRI 1043 / ATCC BAA-672) (Erwinia carotovora subsp. atroseptica).